We begin with the raw amino-acid sequence, 103 residues long: Large ribosomal subunit protein bL21 (103 aa).

Belongs to the bacterial ribosomal protein bL21 family. In terms of assembly, part of the 50S ribosomal subunit. Contacts protein L20.

Functionally, this protein binds to 23S rRNA in the presence of protein L20. In Colwellia psychrerythraea (strain 34H / ATCC BAA-681) (Vibrio psychroerythus), this protein is Large ribosomal subunit protein bL21.